The chain runs to 264 residues: Undecaprenyl-diphosphatase (264 aa).

Helical transmembrane passes span 7–27 (IVIPIIIGIIQGITEFFPVSS), 45–65 (TKILEIFVQLGSTISVFLFFY), 86–106 (IHVLISILPTMFLGLIFYNKI), 109–129 (LFNPTNVMYALILGGFFLIIA), 145–165 (INLVQSLIIGCFQTLCLYPGF), 186–206 (VNFSFIISIPLIAGASVLDLI), 215–235 (LNIPYLFSGFTISFIISFLLI), and 244–264 (KVSLTFFGIYRFLIAGIIYFI).

It belongs to the UppP family.

It is found in the cell membrane. The catalysed reaction is di-trans,octa-cis-undecaprenyl diphosphate + H2O = di-trans,octa-cis-undecaprenyl phosphate + phosphate + H(+). Catalyzes the dephosphorylation of undecaprenyl diphosphate (UPP). Confers resistance to bacitracin. In Buchnera aphidicola subsp. Schizaphis graminum (strain Sg), this protein is Undecaprenyl-diphosphatase.